Reading from the N-terminus, the 239-residue chain is SH3 domain-binding glutamic acid-rich protein (239 aa).

The SH3-binding motif lies at 124–130 (NGIPLPP). A disordered region spans residues 159 to 239 (GLAPPPDSKG…GEEPGEDEDS (81 aa)). The span at 167-185 (KGSEKAEEGGETEAQKEGS) shows a compositional bias: basic and acidic residues. Over residues 198–239 (NEEEGETATEETEEIAMEGAEGEAEEEEETAEGEEPGEDEDS) the composition is skewed to acidic residues.

Belongs to the SH3BGR family. As to expression, expressed in heart and skeletal muscle.

The sequence is that of SH3 domain-binding glutamic acid-rich protein (SH3BGR) from Homo sapiens (Human).